The chain runs to 578 residues: Oxygen sensor histidine kinase response regulator DevS/DosS (578 aa).

GAF domains lie at 63–200 and 231–369; these read DLEA…GIAV and EPAT…ALAW. His149 contacts heme. The 196-residue stretch at 383 to 578 folds into the Histidine kinase domain; sequence VLTDRDRIAR…VLRWSAPLSQ (196 aa). Position 395 is a phosphohistidine; by autocatalysis (His395).

Mg(2+) is required as a cofactor. It depends on heme as a cofactor.

The protein resides in the cytoplasm. It carries out the reaction ATP + protein L-histidine = ADP + protein N-phospho-L-histidine.. Functionally, member of the two-component regulatory system DevR/DevS (DosR/DosS) involved in onset of the dormancy response. Regulates an approximately 48-member regulon. Required for full induction of the DevR (DosR) regulon; acts later than DosT to positively regulate expression of the DevR regulon during adaptation to anaerobiosis. Characterized as an oxygen sensor; O(2) acts as a switch, with O(2)-bound Fe(2+) protein inactive in autophosphorylation. Has also been suggested to act as a redox sensor, or perhaps as a dual oxygen/redox sensor. Donates a phosphate group to transcriptional regulator DevR (DosR). The protein is Oxygen sensor histidine kinase response regulator DevS/DosS (devS) of Mycobacterium tuberculosis (strain CDC 1551 / Oshkosh).